A 163-amino-acid chain; its full sequence is ATP synthase subunit b (163 aa).

A helical transmembrane segment spans residues 9–29 (GLLIAQLINVVFVVWLLTTFL).

Belongs to the ATPase B chain family. In terms of assembly, F-type ATPases have 2 components, F(1) - the catalytic core - and F(0) - the membrane proton channel. F(1) has five subunits: alpha(3), beta(3), gamma(1), delta(1), epsilon(1). F(0) has four main subunits: a(1), b(2) and c(10-14). The alpha and beta chains form an alternating ring which encloses part of the gamma chain. F(1) is attached to F(0) by a central stalk formed by the gamma and epsilon chains, while a peripheral stalk is formed by the delta and b chains.

The protein localises to the cell membrane. F(1)F(0) ATP synthase produces ATP from ADP in the presence of a proton or sodium gradient. F-type ATPases consist of two structural domains, F(1) containing the extramembraneous catalytic core and F(0) containing the membrane proton channel, linked together by a central stalk and a peripheral stalk. During catalysis, ATP synthesis in the catalytic domain of F(1) is coupled via a rotary mechanism of the central stalk subunits to proton translocation. Functionally, component of the F(0) channel, it forms part of the peripheral stalk, linking F(1) to F(0). The polypeptide is ATP synthase subunit b (Roseiflexus castenholzii (strain DSM 13941 / HLO8)).